Consider the following 604-residue polypeptide: Glutamine--fructose-6-phosphate aminotransferase [isomerizing] (604 aa).

The active-site Nucleophile; for GATase activity is the Cys-2. The Glutamine amidotransferase type-2 domain maps to 2 to 218 (CGIVGVVGNR…DKELVILTKD (217 aa)). SIS domains are found at residues 284–423 (IITS…ANGK) and 452–594 (VAEK…VDKP). Lys-599 acts as the For Fru-6P isomerization activity in catalysis.

Homodimer.

The protein resides in the cytoplasm. The catalysed reaction is D-fructose 6-phosphate + L-glutamine = D-glucosamine 6-phosphate + L-glutamate. In terms of biological role, catalyzes the first step in hexosamine metabolism, converting fructose-6P into glucosamine-6P using glutamine as a nitrogen source. In Streptococcus pyogenes serotype M3 (strain ATCC BAA-595 / MGAS315), this protein is Glutamine--fructose-6-phosphate aminotransferase [isomerizing].